Here is a 287-residue protein sequence, read N- to C-terminus: Eukaryotic translation initiation factor 3 subunit F (287 aa).

An MPN domain is found at 12-142; that stretch reads VRVHPVVLFQ…IKAYVCVSLG (131 aa).

It belongs to the eIF-3 subunit F family. As to quaternary structure, component of the eukaryotic translation initiation factor 3 (eIF-3) complex.

Its subcellular location is the cytoplasm. Its function is as follows. Component of the eukaryotic translation initiation factor 3 (eIF-3) complex, which is involved in protein synthesis of a specialized repertoire of mRNAs and, together with other initiation factors, stimulates binding of mRNA and methionyl-tRNAi to the 40S ribosome. The eIF-3 complex specifically targets and initiates translation of a subset of mRNAs involved in cell proliferation. The sequence is that of Eukaryotic translation initiation factor 3 subunit F from Aedes aegypti (Yellowfever mosquito).